Consider the following 826-residue polypeptide: U4/U6 snRNA-associated-splicing factor PRP24 (826 aa).

RRM domains follow at residues 310 to 385 (TSVF…EAAG), 386 to 463 (ITLY…YSDP), 477 to 554 (REVH…LSVS), and 598 to 670 (RSFA…AVPQ).

It localises to the nucleus. Functions as a recycling factor of the spliceosome, a machinery that forms on each precursor-messenger RNA (pre-mRNA) and catalyzes the removal of introns. Chaperones the re-annealing of U4 and U6 snRNAs (small nuclear RNAs) released from previous rounds of splicing, an initial step in reforming the U4/U6-U5 tri-snRNP (small nuclear ribonucleoprotein) that can reassemble into another spliceosome complex; this step involves binding U6 and facilitating the unwinding of the U6 internal stem loop, followed by base-pairing of U6 to U4. The polypeptide is U4/U6 snRNA-associated-splicing factor PRP24 (Ophiostoma ulmi (Dutch elm disease fungus)).